Consider the following 231-residue polypeptide: 7-cyano-7-deazaguanine synthase (231 aa).

8–18 (FSGGQDSTTCL) contributes to the ATP binding site. Positions 188, 197, 200, and 203 each coordinate Zn(2+).

This sequence belongs to the QueC family. Zn(2+) serves as cofactor.

The catalysed reaction is 7-carboxy-7-deazaguanine + NH4(+) + ATP = 7-cyano-7-deazaguanine + ADP + phosphate + H2O + H(+). It participates in purine metabolism; 7-cyano-7-deazaguanine biosynthesis. Catalyzes the ATP-dependent conversion of 7-carboxy-7-deazaguanine (CDG) to 7-cyano-7-deazaguanine (preQ(0)). This chain is 7-cyano-7-deazaguanine synthase, found in Salmonella paratyphi A (strain ATCC 9150 / SARB42).